The chain runs to 395 residues: Selection and upkeep of intraepithelial T-cells protein 7 (395 aa).

The signal sequence occupies residues 1-25 (MMKPEFFCFSGFCVYFLFLQVVVSS). One can recognise an Ig-like V-type domain in the interval 26 to 141 (EKLRVTTPTR…DAAIMNLNVT (116 aa)). Topologically, residues 26–248 (EKLRVTTPTR…FNRDRIWMES (223 aa)) are extracellular. Residues Cys-49 and Cys-123 are joined by a disulfide bond. Asn-92 and Asn-139 each carry an N-linked (GlcNAc...) asparagine glycan. An Ig-like C1-type domain is found at 142 to 233 (AVGLETEIHV…TGEEKQTSII (92 aa)). Residues Cys-163 and Cys-217 are joined by a disulfide bond. The chain crosses the membrane as a helical span at residues 249 to 269 (LASIVWIMLSVYILYIICFYW). Residues 270–287 (RTGCASGCLSKCFCVVTS) lie on the Cytoplasmic side of the membrane. The chain crosses the membrane as a helical span at residues 288-308 (WPVQIVHLLFCTGTFFAIYLP). The Extracellular segment spans residues 309–329 (HRSRVSLSDPQFPLYNNWITE). Residues 330–350 (LLFVILFLTICFALPIILLFI) form a helical membrane-spanning segment. At 351–395 (QFQFTSLTKWEKNKDGIMDQPRLGKAHETSSLYRKKTGKSWEQEK) the chain is on the cytoplasmic side. The tract at residues 371-395 (PRLGKAHETSSLYRKKTGKSWEQEK) is disordered.

This sequence belongs to the SKINT family. As to expression, expressed in skin, thymus, testis and, to a lower extent, bladder.

The protein resides in the membrane. Its function is as follows. May act by engaging a cell surface molecule on immature T-cells in the embryonic thymus. This Mus musculus (Mouse) protein is Selection and upkeep of intraepithelial T-cells protein 7 (Skint7).